Here is an 876-residue protein sequence, read N- to C-terminus: Valine--tRNA ligase (876 aa).

Residues 43–53 carry the 'HIGH' region motif; sequence PNVTGVLHMGH. The 'KMSKS' region signature appears at 533 to 537; that stretch reads KMSKS. Position 536 (lysine 536) interacts with ATP. Residues 804–876 are a coiled coil; sequence GALIDVEEEI…DSLNQLQSTK (73 aa).

The protein belongs to the class-I aminoacyl-tRNA synthetase family. ValS type 1 subfamily. As to quaternary structure, monomer.

The protein resides in the cytoplasm. It catalyses the reaction tRNA(Val) + L-valine + ATP = L-valyl-tRNA(Val) + AMP + diphosphate. In terms of biological role, catalyzes the attachment of valine to tRNA(Val). As ValRS can inadvertently accommodate and process structurally similar amino acids such as threonine, to avoid such errors, it has a 'posttransfer' editing activity that hydrolyzes mischarged Thr-tRNA(Val) in a tRNA-dependent manner. The sequence is that of Valine--tRNA ligase from Porphyromonas gingivalis (strain ATCC 33277 / DSM 20709 / CIP 103683 / JCM 12257 / NCTC 11834 / 2561).